Here is a 207-residue protein sequence, read N- to C-terminus: Probable HTH-type transcriptional regulator YttP (207 aa).

Residues 3–63 enclose the HTH tetR-type domain; the sequence is VSTKDKIIES…HLVSEFYEGY (61 aa). Positions 26–45 form a DNA-binding region, H-T-H motif; it reads SVREIAKSADVNVAHISYYF.

The polypeptide is Probable HTH-type transcriptional regulator YttP (yttP) (Bacillus subtilis (strain 168)).